Consider the following 433-residue polypeptide: MTAIASIWAREILDSRGNPTVEVEVTLDSGYIGRAAVPSGASTGTREALELRDGDKQRYNGKGVLKVVEAVNGPISEAVIGIDALRQVQVDNTLIDLDGTDNKSKLGANAILGVSLATARAAAEAVGLPLYQYIGGTNAKVLPVPLMNVINGGAHAPNNLDIQEFMIMPVGAETFRDALRMGAEIFHTLKTILSADGHVTSVGDEGGFAPHLKSHDEAFQYLVKAIEEAGYNPGSEVMLAIDVAASEFYKDKRYFLTEYKTPLNSEEMIEWLKGFTSRYPLISIEDGLAENDWDGWRELTVELGNDIQLVGDDIFVTNPIMLSQGVEEGIGNSILIKVNQIGTLTETLDTIELAKQSAYTTIVSHRSGETEDSFIADLAVGINAGQIKTGSLSRSDRLAKYNQLLRIEEELEDSAIYYGPVFSESNHSCCDHT.

Q163 serves as a coordination point for (2R)-2-phosphoglycerate. The Proton donor role is filled by E205. Residues D242, E285, and D312 each coordinate Mg(2+). (2R)-2-phosphoglycerate contacts are provided by K337, R366, S367, and K388. K337 serves as the catalytic Proton acceptor.

This sequence belongs to the enolase family. Requires Mg(2+) as cofactor.

Its subcellular location is the cytoplasm. It is found in the secreted. The protein resides in the cell surface. It catalyses the reaction (2R)-2-phosphoglycerate = phosphoenolpyruvate + H2O. It functions in the pathway carbohydrate degradation; glycolysis; pyruvate from D-glyceraldehyde 3-phosphate: step 4/5. Functionally, catalyzes the reversible conversion of 2-phosphoglycerate (2-PG) into phosphoenolpyruvate (PEP). It is essential for the degradation of carbohydrates via glycolysis. The sequence is that of Enolase from Lawsonia intracellularis (strain PHE/MN1-00).